The following is a 363-amino-acid chain: G-protein coupled receptor 78 (363 aa).

The Extracellular segment spans residues 1 to 7; sequence MGPGEAL. The chain crosses the membrane as a helical span at residues 8–28; sequence LAGLLVMVLAVALLSNALVLL. Residues 29 to 47 are Cytoplasmic-facing; sequence CCAYSAELRTRASGVLLVN. A helical transmembrane segment spans residues 48-68; it reads LSLGHLLLAALDMPFTLLGVM. The Extracellular portion of the chain corresponds to 69 to 80; it reads RGRTPSAPGACQ. Residues cysteine 79 and cysteine 156 are joined by a disulfide bond. Residues 81–101 form a helical membrane-spanning segment; that stretch reads VIGFLDTFLASNAALSVAALS. Over 102–122 the chain is Cytoplasmic; sequence ADQWLAVGFPLRYAGRLRPRY. The chain crosses the membrane as a helical span at residues 123–143; the sequence is AGLLLGCAWGQSLAFSGAALG. The Extracellular portion of the chain corresponds to 144–168; the sequence is CSWLGYSSAFASCSLRLPPEPERPR. The chain crosses the membrane as a helical span at residues 169-189; it reads FAAFTATLHAVGFVLPLAVLC. The Cytoplasmic portion of the chain corresponds to 190-242; it reads LTSLQVHRVARRHCQRMDTVTMKALALLADLHPSVRQRCLIQQKRRRHRATRK. The chain crosses the membrane as a helical span at residues 243–263; it reads IGIAIATFLICFAPYVMTRLA. The Extracellular segment spans residues 264–277; it reads ELVPFVTVNAQWGI. A helical membrane pass occupies residues 278 to 297; the sequence is LSKCLTYSKAVADPFTYSLL. The Cytoplasmic portion of the chain corresponds to 298 to 363; it reads RRPFRQVLAG…ENDSCLQQTH (66 aa). Positions 340-363 are disordered; that stretch reads TPRPASTHNGSVDTENDSCLQQTH. Residues 343-363 are compositionally biased toward polar residues; it reads PASTHNGSVDTENDSCLQQTH.

This sequence belongs to the G-protein coupled receptor 1 family. High level of expression in placenta. Expressed throughout the brain at low level. No expression detected in skeletal muscle, lung, heart, liver, pancreas, or kidney.

The protein localises to the cell membrane. Functionally, orphan receptor. Displays a significant level of constitutive activity. Its effect is mediated by G(s)-alpha protein that stimulate adenylate cyclase, resulting in an elevation of intracellular cAMP. This Homo sapiens (Human) protein is G-protein coupled receptor 78 (GPR78).